The following is a 141-amino-acid chain: MKSTFALVFGILMVIAHLSFADEKVLCFDNSEETLNKEIKLFEQCGVTKDNANEENFNEAYICVLEKMEVLDENNQIVIEKFKETEKTEIVNKEEELMAAVDECAENKPTAEPKEFIQCYDEKVDKLCPDDKDIFEEDMEE.

A signal peptide spans 1 to 21; the sequence is MKSTFALVFGILMVIAHLSFA.

It belongs to the scoloptoxin-17 family. In terms of processing, contains 3 disulfide bonds. In terms of tissue distribution, expressed by the venom gland.

Its subcellular location is the secreted. The protein is U-scoloptoxin(17)-Er3a of Ethmostigmus rubripes (Giant centipede).